A 413-amino-acid chain; its full sequence is Alpha-1-antitrypsin-like protein CM55-ST (413 aa).

An N-terminal signal peptide occupies residues 1 to 24 (MPSSISWGLLLLAALSCLGPGSLA). Q25 is subject to Pyrrolidone carboxylic acid. 4 N-linked (GlcNAc...) asparagine glycosylation sites follow: N65, N102, N165, and N266. The segment at 368–387 (GGTVLGNIRSTLRYEVIFDR) is RCL.

Belongs to the serpin family. Expressed in liver.

This is Alpha-1-antitrypsin-like protein CM55-ST from Tamias sibiricus (Siberian chipmunk).